The sequence spans 397 residues: Elongation factor Tu (397 aa).

The 198-residue stretch at 10–207 (KPHCNIGTIG…AVDEYIPQPE (198 aa)) folds into the tr-type G domain. The segment at 19–26 (GHVDHGKT) is G1. Position 19-26 (19-26 (GHVDHGKT)) interacts with GTP. T26 contributes to the Mg(2+) binding site. A G2 region spans residues 61-65 (GITIS). The segment at 82-85 (DCPG) is G3. GTP contacts are provided by residues 82 to 86 (DCPGH) and 137 to 140 (NKVD). The G4 stretch occupies residues 137–140 (NKVD). The G5 stretch occupies residues 175–177 (SAL).

It belongs to the TRAFAC class translation factor GTPase superfamily. Classic translation factor GTPase family. EF-Tu/EF-1A subfamily. Monomer.

Its subcellular location is the cytoplasm. It catalyses the reaction GTP + H2O = GDP + phosphate + H(+). Functionally, GTP hydrolase that promotes the GTP-dependent binding of aminoacyl-tRNA to the A-site of ribosomes during protein biosynthesis. This is Elongation factor Tu from Zymomonas mobilis subsp. mobilis (strain ATCC 31821 / ZM4 / CP4).